The following is a 135-amino-acid chain: Galectin-1 (135 aa).

Alanine 2 carries the N-acetylalanine modification. One can recognise a Galectin domain in the interval 4–135 (GLVASNLNLK…DFKIKCVAFE (132 aa)). N6-acetyllysine is present on residues lysine 13 and lysine 29. Serine 30 is subject to Phosphoserine. A beta-D-galactoside-binding positions include 45–49 (HFNPR), histidine 53, asparagine 62, and 69–72 (WGAE). An N6-acetyllysine; alternate modification is found at lysine 108. Position 108 is an N6-succinyllysine; alternate (lysine 108). An N6-acetyllysine modification is found at lysine 128.

Homodimer. Binds LGALS3BP. Interacts with CD2, CD3, CD4, CD6, CD7, CD43, ALCAM and CD45. Interacts with laminin (via poly-N-acetyllactosamine). Interacts with SUSD2. Interacts with cargo receptor TMED10; the interaction mediates the translocation from the cytoplasm into the ERGIC (endoplasmic reticulum-Golgi intermediate compartment) and thereby secretion.

The protein resides in the secreted. It localises to the extracellular space. Its subcellular location is the extracellular matrix. It is found in the cytoplasm. Functionally, lectin that binds beta-galactoside and a wide array of complex carbohydrates. Plays a role in regulating apoptosis, cell proliferation and cell differentiation. Inhibits CD45 protein phosphatase activity and therefore the dephosphorylation of Lyn kinase. Strong inducer of T-cell apoptosis. The chain is Galectin-1 (LGALS1) from Ovis aries (Sheep).